The primary structure comprises 123 residues: uncharacterized protein (123 aa).

This is an uncharacterized protein from Pasteurella multocida (strain Pm70).